The following is a 219-amino-acid chain: Elongation factor Ts, chloroplastic (219 aa).

The protein belongs to the EF-Ts family.

It localises to the plastid. Its subcellular location is the chloroplast. Associates with the EF-Tu.GDP complex and induces the exchange of GDP to GTP. It remains bound to the aminoacyl-tRNA.EF-Tu.GTP complex up to the GTP hydrolysis stage on the ribosome. The protein is Elongation factor Ts, chloroplastic (tsf) of Rhodomonas salina (Cryptomonas salina).